Here is a 433-residue protein sequence, read N- to C-terminus: MENILAMVRDFGLFHLQWGQGIMILVGLVLLYLAIVKRFEPLLLVPIGFGGILSNLPDAGLAMSAIENAVYAAKPEVMTAFSEVLQLSSYMPADIKQALSSATPLQMTTLHLLAEQYQYSDGMLYLFYSIAIASGAGPLIIFMGVGAMTDFGPLLANPKTLLLGAAAQFGIFTTVLGALALSSLGVMDFSVAQAAAIGIIGGADGPTAIYVSSMLAPELLGAIAVAAYSYMALVPMIQPPIMRALTTQEERKIQMQQLRQVHKLEKIGFPLLLLILIALLLPSATPLLGMFCFGNLMRECGVVERLSDTAQNALINIVTIFLGLSVGSKLMADKFLQPQTIGILVLGIVAFCVGTAAGVLMAKLMNRFSTTKLNPLIGSAGVSAVPMAARVSNKVGLEANAQNFLLMHAMGPNVAGVIGSAVAAGVMIKYVMG.

9 consecutive transmembrane segments (helical) span residues 13–35 (LFHL…YLAI), 125–147 (YLFY…GVGA), 162–184 (LLGA…LSSL), 189–211 (FSVA…AIYV), 215–237 (LAPE…VPMI), 267–289 (IGFP…PLLG), 309–328 (TAQN…SVGS), 340–362 (TIGI…VLMA), and 404–426 (FLLM…AAGV).

It belongs to the GcdB/MmdB/OadB family. As to quaternary structure, heterotrimer of an alpha, a beta and a gamma subunit. Na(+) is required as a cofactor.

The protein resides in the cell membrane. The catalysed reaction is oxaloacetate + 2 Na(+)(in) + H(+) = pyruvate + 2 Na(+)(out) + CO2. In terms of biological role, catalyzes the decarboxylation of oxaloacetate coupled to Na(+) translocation. This chain is Probable oxaloacetate decarboxylase beta chain (oadB), found in Vibrio cholerae serotype O1 (strain ATCC 39315 / El Tor Inaba N16961).